A 290-amino-acid polypeptide reads, in one-letter code: PIH1 domain-containing protein 1 (290 aa).

3 positions are modified to phosphoserine: Ser-12, Ser-16, and Ser-173.

Belongs to the PIH1 family. As to quaternary structure, component of the R2TP complex composed at least of RUVBL1, RUVBL2, RPAP3 and PIHD1. Component of the PAQosome complex which is responsible for the biogenesis of several protein complexes and which consists of R2TP complex members RUVBL1, RUVBL2, RPAP3 and PIH1D1, URI complex members PFDN2, PFDN6, PDRG1, UXT and URI1 as well as ASDURF, POLR2E and DNAAF10/WDR92. Interacts with phosphorylated TELO2. Mediates interaction of TELO2 with the R2TP complex. Interacts with phosphorylated ECD, EFTUD2/SNRP116, RPB1 and UBR5 and with RPB1 in a phosphorylation-independent manner. Interacts with the core C/D box snoRNP particle components NOP58 and FBL and with RUVBL1/TIP49. Interacts with RPAP3 and DNAAF10. Interacts with histone H4 and with SWI/SNF complex member SMARCB1/SNF5. Interacts with the mTORC1 complex member RPTOR. Interacts with isoform 1 of MSL1.

It is found in the nucleus. Functionally, involved in the assembly of C/D box small nucleolar ribonucleoprotein (snoRNP) particles. Recruits the SWI/SNF complex to the core promoter of rRNA genes and enhances pre-rRNA transcription. Mediates interaction of TELO2 with the R2TP complex which is necessary for the stability of MTOR and SMG1. Positively regulates the assembly and activity of the mTORC1 complex. This is PIH1 domain-containing protein 1 (Pih1d1) from Mus musculus (Mouse).